Reading from the N-terminus, the 320-residue chain is Methionyl-tRNA formyltransferase (320 aa).

112-115 contacts (6S)-5,6,7,8-tetrahydrofolate; sequence SLLP.

The protein belongs to the Fmt family.

It carries out the reaction L-methionyl-tRNA(fMet) + (6R)-10-formyltetrahydrofolate = N-formyl-L-methionyl-tRNA(fMet) + (6S)-5,6,7,8-tetrahydrofolate + H(+). Attaches a formyl group to the free amino group of methionyl-tRNA(fMet). The formyl group appears to play a dual role in the initiator identity of N-formylmethionyl-tRNA by promoting its recognition by IF2 and preventing the misappropriation of this tRNA by the elongation apparatus. This is Methionyl-tRNA formyltransferase from Allorhizobium ampelinum (strain ATCC BAA-846 / DSM 112012 / S4) (Agrobacterium vitis (strain S4)).